Reading from the N-terminus, the 297-residue chain is Protein PecM (297 aa).

10 helical membrane passes run 6–26 (FAFY…QFLP), 38–58 (ALPA…GWLW), 60–80 (LFVL…FAAY), 86–106 (VVAL…FLLL), 116–136 (VAAV…KAPL), 138–158 (PAGL…LVLT), 167–187 (MTML…ILPV), 203–223 (LAGY…MWFS), 231–251 (VIMS…GFLF), and 261–281 (LVGV…SLFS). EamA domains lie at 12-130 (CVWG…LLIS) and 149-276 (MSMA…IVQD).

Belongs to the EamA transporter family.

Its subcellular location is the cell membrane. Its function is as follows. Involved in pectinase, cellulase, and blue pigment regulation. The chain is Protein PecM (pecM) from Dickeya dadantii (strain 3937) (Erwinia chrysanthemi (strain 3937)).